Reading from the N-terminus, the 495-residue chain is Cobyric acid synthase (495 aa).

Residues 256-444 (KVNVAVVLLR…VHGILDNPSV (189 aa)) enclose the GATase cobBQ-type domain. The active-site Nucleophile is cysteine 337. The active site involves histidine 436.

It belongs to the CobB/CobQ family. CobQ subfamily.

It participates in cofactor biosynthesis; adenosylcobalamin biosynthesis. In terms of biological role, catalyzes amidations at positions B, D, E, and G on adenosylcobyrinic A,C-diamide. NH(2) groups are provided by glutamine, and one molecule of ATP is hydrogenolyzed for each amidation. This Bacteroides fragilis (strain ATCC 25285 / DSM 2151 / CCUG 4856 / JCM 11019 / LMG 10263 / NCTC 9343 / Onslow / VPI 2553 / EN-2) protein is Cobyric acid synthase.